Reading from the N-terminus, the 540-residue chain is Glucose-6-phosphate isomerase (540 aa).

The active-site Proton donor is the E346. Residues H377 and K505 contribute to the active site.

The protein belongs to the GPI family.

It localises to the cytoplasm. The enzyme catalyses alpha-D-glucose 6-phosphate = beta-D-fructose 6-phosphate. The protein operates within carbohydrate biosynthesis; gluconeogenesis. Its pathway is carbohydrate degradation; glycolysis; D-glyceraldehyde 3-phosphate and glycerone phosphate from D-glucose: step 2/4. Its function is as follows. Catalyzes the reversible isomerization of glucose-6-phosphate to fructose-6-phosphate. This chain is Glucose-6-phosphate isomerase, found in Francisella tularensis subsp. tularensis (strain WY96-3418).